The sequence spans 503 residues: ATP synthase subunit alpha (503 aa).

Residue 171–178 (DRQTGKTA) coordinates ATP.

This sequence belongs to the ATPase alpha/beta chains family. In terms of assembly, F-type ATPases have 2 components, CF(1) - the catalytic core - and CF(0) - the membrane proton channel. CF(1) has five subunits: alpha(3), beta(3), gamma(1), delta(1), epsilon(1). CF(0) has four main subunits: a(1), b(1), b'(1) and c(9-12).

The protein resides in the cellular thylakoid membrane. It carries out the reaction ATP + H2O + 4 H(+)(in) = ADP + phosphate + 5 H(+)(out). Functionally, produces ATP from ADP in the presence of a proton gradient across the membrane. The alpha chain is a regulatory subunit. This is ATP synthase subunit alpha from Synechococcus sp. (strain PCC 6716).